A 453-amino-acid polypeptide reads, in one-letter code: Growth/differentiation factor 9 (453 aa).

The signal sequence occupies residues 1 to 27 (MALPNKFFLWFCCFAWLCFPISLDSLP). Residues 28–318 (SRGEAQIVAR…EGVRSSRHRR (291 aa)) constitute a propeptide that is removed on maturation. N-linked (GlcNAc...) asparagine glycosylation is found at Asn163, Asn236, Asn255, and Asn269. Positions 282–328 (LHPKRKPSQGPDQRRELSAYPVGEEAAEGVRSSRHRRDQESVSSELK) are disordered. Basic and acidic residues predominate over residues 318–328 (RDQESVSSELK). A glycan (N-linked (GlcNAc...) asparagine) is linked at Asn337. Cystine bridges form between Cys352/Cys418, Cys381/Cys450, and Cys385/Cys452.

This sequence belongs to the TGF-beta family. In terms of assembly, homodimer or heterodimer (Potential). But, in contrast to other members of this family, cannot be disulfide-linked. Post-translationally, phosphorylated; phosphorylation is critical for GDF9 function.

The protein localises to the secreted. Functionally, required for ovarian folliculogenesis. The polypeptide is Growth/differentiation factor 9 (GDF9) (Capra hircus (Goat)).